Here is a 264-residue protein sequence, read N- to C-terminus: MTPTTLSHLRKRKQEKHKFATITAYDASFARLFAEQGIDVMLVGDSLGMTLQGHDTTLSVTVADIAYHTRAVRAGAPACLLMADMPFMSYATPELACTNAAELMRAGANLVKMEGGAWLCDSVRMLTERAVPVCGHLGLMPQSVNIFGGYRVQGRDQDAADQLLSDALALEGAGAQMLVLECVPAQVAKTISEALRIPVIGIGAGRDTDGQILVMHDALGISSGHMPSFVKNFLAAEGDIRAAVRRYINDVEQGLFPADEHTFN.

D45 and D84 together coordinate Mg(2+). 3-methyl-2-oxobutanoate is bound by residues 45–46 (DS), D84, and K112. Mg(2+) is bound at residue E114. E181 acts as the Proton acceptor in catalysis.

The protein belongs to the PanB family. In terms of assembly, homodecamer; pentamer of dimers. It depends on Mg(2+) as a cofactor.

The protein resides in the cytoplasm. The catalysed reaction is 3-methyl-2-oxobutanoate + (6R)-5,10-methylene-5,6,7,8-tetrahydrofolate + H2O = 2-dehydropantoate + (6S)-5,6,7,8-tetrahydrofolate. Its pathway is cofactor biosynthesis; (R)-pantothenate biosynthesis; (R)-pantoate from 3-methyl-2-oxobutanoate: step 1/2. Catalyzes the reversible reaction in which hydroxymethyl group from 5,10-methylenetetrahydrofolate is transferred onto alpha-ketoisovalerate to form ketopantoate. The protein is 3-methyl-2-oxobutanoate hydroxymethyltransferase of Edwardsiella ictaluri (strain 93-146).